Here is a 2055-residue protein sequence, read N- to C-terminus: Citron rho-interacting kinase (2055 aa).

Residues 97 to 359 (FEVRSLVGCG…FEGLCCHPFF (263 aa)) form the Protein kinase domain. ATP contacts are provided by residues 103 to 111 (VGCGHFAEV) and K126. Residue D221 is the Proton acceptor of the active site. Residues 360–430 (ARTDWNNIRN…SKALGYLGRS (71 aa)) enclose the AGC-kinase C-terminal domain. The disordered stretch occupies residues 375 to 398 (VPTLKSDDDTSNFDEPEKNSWVSS). 3 coiled-coil regions span residues 457-747 (LQDS…AQVS), 773-1238 (IKKD…LEYQ), and 1284-1318 (YNEL…AREE). The disordered stretch occupies residues 1349 to 1376 (PEHQPSAMSLLAPPSSRRKEASTPEEFS). The segment covering 1353 to 1363 (PSAMSLLAPPS) has biased composition (low complexity). Over residues 1365–1376 (RRKEASTPEEFS) the composition is skewed to basic and acidic residues. The Phorbol-ester/DAG-type zinc finger occupies 1388–1437 (PHRFNVGLNMRATKCAVCLDTVHFGRQASKCLECQVMCHPKCSTCLPATC). One can recognise a PH domain in the interval 1469-1589 (SLHLEGWMKV…WVTALESVVA (121 aa)). The 291-residue stretch at 1617 to 1907 (RLDMNCTLPF…RYLGPAISSG (291 aa)) folds into the CNH domain. The disordered stretch occupies residues 1932-2040 (SGTEQHRVPS…RGRLPAGAVR (109 aa)). Polar residues predominate over residues 1939–1948 (VPSTSRSSPN). A compositionally biased stretch (basic and acidic residues) spans 1974–2031 (SHPREPSTPHRYRDREGRTELRRDKSPGRPLEREKSPGRMLSTRRERSPGRLFEDSSR).

It belongs to the protein kinase superfamily. AGC Ser/Thr protein kinase family. As to quaternary structure, homodimer. Directly interacts with KIF14 depending on the activation state (stronger interaction with the kinase-dead form). Interacts with TTC3.

The protein localises to the cytoplasm. It carries out the reaction L-seryl-[protein] + ATP = O-phospho-L-seryl-[protein] + ADP + H(+). The enzyme catalyses L-threonyl-[protein] + ATP = O-phospho-L-threonyl-[protein] + ADP + H(+). Its function is as follows. Plays a role in cytokinesis. Required for KIF14 localization to the central spindle and midbody. Putative RHO/RAC effector that binds to the GTP-bound forms of RHO and RAC1. It probably binds p21 with a tighter specificity in vivo. Displays serine/threonine protein kinase activity. Plays an important role in the regulation of cytokinesis and the development of the central nervous system. Phosphorylates MYL9/MLC2. This Rattus norvegicus (Rat) protein is Citron rho-interacting kinase.